The primary structure comprises 190 residues: Xanthine phosphoribosyltransferase 2 (190 aa).

2 residues coordinate xanthine: L20 and N27. 129 to 133 (ANGCA) is a binding site for 5-phospho-alpha-D-ribose 1-diphosphate. Xanthine is bound at residue K157.

It belongs to the purine/pyrimidine phosphoribosyltransferase family. Xpt subfamily. Homodimer.

The protein resides in the cytoplasm. It carries out the reaction XMP + diphosphate = xanthine + 5-phospho-alpha-D-ribose 1-diphosphate. It functions in the pathway purine metabolism; XMP biosynthesis via salvage pathway; XMP from xanthine: step 1/1. Functionally, converts the preformed base xanthine, a product of nucleic acid breakdown, to xanthosine 5'-monophosphate (XMP), so it can be reused for RNA or DNA synthesis. In Clostridium botulinum (strain ATCC 19397 / Type A), this protein is Xanthine phosphoribosyltransferase 2.